A 249-amino-acid polypeptide reads, in one-letter code: UPF0246 protein EUBREC_1226 (249 aa).

It belongs to the UPF0246 family.

In Agathobacter rectalis (strain ATCC 33656 / DSM 3377 / JCM 17463 / KCTC 5835 / VPI 0990) (Eubacterium rectale), this protein is UPF0246 protein EUBREC_1226.